The chain runs to 350 residues: Formimidoylglutamase (350 aa).

Residues His130, Asp165, His167, Asp169, Asp269, and Asp271 each coordinate Mn(2+).

The protein belongs to the arginase family. Mn(2+) serves as cofactor.

It catalyses the reaction N-formimidoyl-L-glutamate + H2O = formamide + L-glutamate. The protein operates within amino-acid degradation; L-histidine degradation into L-glutamate; L-glutamate from N-formimidoyl-L-glutamate (hydrolase route): step 1/1. Catalyzes the conversion of N-formimidoyl-L-glutamate to L-glutamate and formamide. The chain is Formimidoylglutamase from Aliivibrio fischeri (strain ATCC 700601 / ES114) (Vibrio fischeri).